The chain runs to 104 residues: Large ribosomal subunit protein bL21 (104 aa).

This sequence belongs to the bacterial ribosomal protein bL21 family. In terms of assembly, part of the 50S ribosomal subunit. Contacts protein L20.

Its function is as follows. This protein binds to 23S rRNA in the presence of protein L20. The sequence is that of Large ribosomal subunit protein bL21 from Streptococcus mutans serotype c (strain ATCC 700610 / UA159).